The sequence spans 733 residues: Protein OBERON 3 (733 aa).

Positions 1 to 15 (MIGEKDLAGDGECSR) are enriched in basic and acidic residues. Disordered regions lie at residues 1–42 (MIGE…YHQK) and 118–142 (NPNSSKRKAHEEEEEAEEEEDKKSN). The segment covering 21-30 (PRFSNLNNQT) has biased composition (polar residues). Positions 120–153 (NSSKRKAHEEEEEAEEEEDKKSNKIETLNLSLAL) form a coiled coil. The PHD-type zinc-finger motif lies at 436-500 (SCMCPVCLRF…MFHCIGCAHK (65 aa)). Positions 592-614 (VAAETSYRKDEASVTPSTSKDQK) are disordered. Residues 644–733 (MFQKKADEAR…RMEVTRQQLV (90 aa)) adopt a coiled-coil conformation.

In terms of assembly, self-interacts. Interacts with OBE1 and OBE2. Interacts with OBE4.

It is found in the nucleus. Functionally, probable transcription factor that functions redundantly with OBE4 in specification of the hypophysis and establishment of the embryonic root. Involved in the activation of ARF5/MP-dependent gene expression during embryonic root meristem initiation. Involved in shoot meristem homeostasis. The chain is Protein OBERON 3 from Arabidopsis thaliana (Mouse-ear cress).